Here is a 640-residue protein sequence, read N- to C-terminus: Chaperone protein dnaK2 (640 aa).

Threonine 197 is modified (phosphothreonine; by autocatalysis). The tract at residues 605–640 is disordered; that stretch reads VYQSAQSSDGTGSSSSGGSGSGGDDEVIDAEFSETK. Over residues 627–640 the composition is skewed to acidic residues; sequence GDDEVIDAEFSETK.

Belongs to the heat shock protein 70 family.

Its function is as follows. Acts as a chaperone. The sequence is that of Chaperone protein dnaK2 (dnaK2) from Thermosynechococcus vestitus (strain NIES-2133 / IAM M-273 / BP-1).